Here is a 90-residue protein sequence, read N- to C-terminus: Protein S100-A6 (90 aa).

2 EF-hand domains span residues 12–47 and 48–83; these read LVAI…IGAK and LQDA…LAMI. 2 residues coordinate Ca(2+): threonine 28 and glutamate 33. Lysine 40 is modified (N6-acetyllysine). Lysine 47 is subject to N6-acetyllysine; alternate. Lysine 47 carries the post-translational modification N6-succinyllysine; alternate. Residues aspartate 61, asparagine 63, aspartate 65, and glutamate 72 each contribute to the Ca(2+) site.

This sequence belongs to the S-100 family. As to quaternary structure, homodimer; head to tail assembly of 2 subunits. Interacts with CACYBP in a calcium-dependent manner. Interacts with ANXA2 and ANXA11 (via N-terminus). Interacts with SUGT1. Interacts with TP53; has higher affinity for TP53 that is phosphorylated on its N-terminal domain, and lower affinity for TP53 that is phosphorylated on its C-terminal domain. Interacts with tropomyosin. Interacts with FKBP4. Interacts with PPP5C (via TPR repeats); the interaction is calcium-dependent and modulates PPP5C activity. Interacts with TPPP; this interaction inhibits TPPP dimerization.

Its subcellular location is the nucleus envelope. The protein resides in the cytoplasm. The protein localises to the cell membrane. In terms of biological role, may function as calcium sensor and modulator, contributing to cellular calcium signaling. May function by interacting with other proteins, such as TPR-containing proteins, and indirectly play a role in many physiological processes such as the reorganization of the actin cytoskeleton and in cell motility. Binds 2 calcium ions. Calcium binding is cooperative. The sequence is that of Protein S100-A6 (S100A6) from Sus scrofa (Pig).